A 278-amino-acid polypeptide reads, in one-letter code: MTVLHSVDFFPSGNASVAIEPRLPQADFPEHHHDFHEIVIVEHGTGIHVFNGQPYTITGGTVCFVRDHDRHLYEHTDNLCLTNVLYRSPDRFQFLAGLNQLLPQEQDGQYPSHWRVNHSVLQQVRQLVAQMEQQEEENDLPSTASREILFMQLLLLLRKSSLQENLENSASRLNLLLAWLEDHFADEVNWDAVADQFSLSLRTLHRQLKQKTGLTPQRYLNRLRLMKARHLLRHSEASVTDIAYRCGFSDSNHFSTLFRREFNWSPRDIRQGRDGFLQ.

The HTH araC/xylS-type domain occupies 174–272; the sequence is NLLLAWLEDH…NWSPRDIRQG (99 aa). 2 consecutive DNA-binding regions (H-T-H motif) follow at residues 191 to 212 and 239 to 262; these read DAVADQFSLSLRTLHRQLKQKT and VTDIAYRCGFSDSNHFSTLFRREF.

Binds DNA as a dimer.

It localises to the cytoplasm. Its function is as follows. Activates expression of the rhaBAD and rhaT operons. The sequence is that of HTH-type transcriptional activator RhaS from Escherichia coli O45:K1 (strain S88 / ExPEC).